The primary structure comprises 217 residues: Adenylate kinase (217 aa).

10-15 serves as a coordination point for ATP; sequence GAGKGT. The interval 30–59 is NMP; that stretch reads STGDMFRAAMKEETDLGLEAKSYIDKGELV. AMP-binding positions include threonine 31, arginine 36, 57 to 59, 85 to 88, and glutamine 92; these read ELV and GFPR. An LID region spans residues 126–163; that stretch reads GRRICKNCGATYHLVFNPPAKENVCDKCGGELYQREDD. Residue arginine 127 participates in ATP binding. Residues cysteine 130 and cysteine 133 each contribute to the Zn(2+) site. 136–137 is an ATP binding site; it reads TY. Positions 150 and 153 each coordinate Zn(2+). AMP is bound by residues arginine 160 and arginine 171. Lysine 199 is an ATP binding site.

This sequence belongs to the adenylate kinase family. As to quaternary structure, monomer.

It localises to the cytoplasm. It carries out the reaction AMP + ATP = 2 ADP. It functions in the pathway purine metabolism; AMP biosynthesis via salvage pathway; AMP from ADP: step 1/1. Its function is as follows. Catalyzes the reversible transfer of the terminal phosphate group between ATP and AMP. Plays an important role in cellular energy homeostasis and in adenine nucleotide metabolism. The sequence is that of Adenylate kinase from Bacillus licheniformis (strain ATCC 14580 / DSM 13 / JCM 2505 / CCUG 7422 / NBRC 12200 / NCIMB 9375 / NCTC 10341 / NRRL NRS-1264 / Gibson 46).